The sequence spans 96 residues: Large ribosomal subunit protein uL23 (96 aa).

It belongs to the universal ribosomal protein uL23 family. Part of the 50S ribosomal subunit. Contacts protein L29, and trigger factor when it is bound to the ribosome.

One of the early assembly proteins it binds 23S rRNA. One of the proteins that surrounds the polypeptide exit tunnel on the outside of the ribosome. Forms the main docking site for trigger factor binding to the ribosome. In Nitratidesulfovibrio vulgaris (strain ATCC 29579 / DSM 644 / CCUG 34227 / NCIMB 8303 / VKM B-1760 / Hildenborough) (Desulfovibrio vulgaris), this protein is Large ribosomal subunit protein uL23.